The chain runs to 481 residues: MTSKDKAVVSLPVSPWDAILKAAKDQLPSLDSDSSLSDCEEEEPFIFQRNQPVLIPDLTEELAEDPVGVDESGTWVTAGRSPSPEPLLVPGRLAIEPRSEWMVRSKDLAHQERRGPGWSCQSCVKSSPILLDTKEAPAWPEGRGSQSPPWSSQGEGATFPLEGKLKTEPSDTDFKNSAKRRALRRERRKMIEREILQKVTQAAQNPASGDQGQVAELGPRPKATSEQSWEGRPVLSLKQLEGWDLDYILQSLPGQQGSQGDSASRSAWWLADRCQDQGHSTGPSQDILLEQLALLCATQSRVRHPTWKVSADKLQDTEEQVARTRSASAESGFQTERVQKRAESRRLKTEPPTVFLDLRLTEPSDPQEHQSQESSEHSSSDSEEEEVGSAGSIPVASSWEQRYCTGKSQLLQQLRAFRKGAVPPQLSAKDGPGGQKDQAQEDTGGSQTQRKKHIKLWAEKQNALNLGDPLGTRLLPGMGQL.

Disordered stretches follow at residues 70–91 (DESG…LVPG), 131–233 (LDTK…EGRP), 306–397 (TWKV…PVAS), and 415–454 (RAFR…KKHI). A phosphoserine mark is found at Ser-83, Ser-145, and Ser-147. Over residues 144-155 (GSQSPPWSSQGE) the composition is skewed to polar residues. Basic and acidic residues predominate over residues 163-176 (GKLKTEPSDTDFKN). The span at 177–188 (SAKRRALRRERR) shows a compositional bias: basic residues. The span at 198–211 (KVTQAAQNPASGDQ) shows a compositional bias: polar residues. Residues 310-322 (SADKLQDTEEQVA) show a composition bias toward basic and acidic residues. The segment covering 323-336 (RTRSASAESGFQTE) has biased composition (polar residues). Phosphoserine is present on Ser-328. Composition is skewed to basic and acidic residues over residues 337–349 (RVQK…RLKT) and 359–380 (RLTE…HSSS).

It localises to the dynein axonemal particle. The protein resides in the cytoplasm. In terms of biological role, in cyliated cells, dynein axonemal particle-specific protein required for deployment of ODA to the axoneme. Interacts with outer dynein arm (ODA) subunits. The protein is Dynein axonemal assembly factor 8 (Dnaaf8) of Rattus norvegicus (Rat).